Reading from the N-terminus, the 342-residue chain is Anthranilate phosphoribosyltransferase (342 aa).

Residues glycine 83, 86-87 (GD), threonine 91, 93-96 (NIST), 111-119 (KHGNRGVSS), and serine 123 each bind 5-phospho-alpha-D-ribose 1-diphosphate. Glycine 83 lines the anthranilate pocket. Residue serine 95 coordinates Mg(2+). Residue asparagine 114 participates in anthranilate binding. Arginine 169 contacts anthranilate. Positions 228 and 229 each coordinate Mg(2+).

Belongs to the anthranilate phosphoribosyltransferase family. As to quaternary structure, homodimer. Mg(2+) serves as cofactor.

The enzyme catalyses N-(5-phospho-beta-D-ribosyl)anthranilate + diphosphate = 5-phospho-alpha-D-ribose 1-diphosphate + anthranilate. Its pathway is amino-acid biosynthesis; L-tryptophan biosynthesis; L-tryptophan from chorismate: step 2/5. Functionally, catalyzes the transfer of the phosphoribosyl group of 5-phosphorylribose-1-pyrophosphate (PRPP) to anthranilate to yield N-(5'-phosphoribosyl)-anthranilate (PRA). This Paraburkholderia phymatum (strain DSM 17167 / CIP 108236 / LMG 21445 / STM815) (Burkholderia phymatum) protein is Anthranilate phosphoribosyltransferase.